Reading from the N-terminus, the 316-residue chain is Ferrochelatase (316 aa).

Fe cation is bound by residues His-186 and Glu-268.

Belongs to the ferrochelatase family.

It is found in the cytoplasm. It carries out the reaction heme b + 2 H(+) = protoporphyrin IX + Fe(2+). The protein operates within porphyrin-containing compound metabolism; protoheme biosynthesis; protoheme from protoporphyrin-IX: step 1/1. Functionally, catalyzes the ferrous insertion into protoporphyrin IX. This chain is Ferrochelatase, found in Deinococcus radiodurans (strain ATCC 13939 / DSM 20539 / JCM 16871 / CCUG 27074 / LMG 4051 / NBRC 15346 / NCIMB 9279 / VKM B-1422 / R1).